Reading from the N-terminus, the 577-residue chain is Proton channel OTOP3 (577 aa).

The disordered stretch occupies residues 1-46 (MASQTSAPAEPAPMPSPEAKTTEGASSYDQADMETKHAGSPCPPKQ). The Cytoplasmic portion of the chain corresponds to 1-69 (MASQTSAPAE…RDRQAQKAGQ (69 aa)). The helical transmembrane segment at 70-90 (LFSGLLALNVVFLGGAFICSM) threads the bilayer. The Extracellular segment spans residues 91 to 100 (IFNKVSVTLG). A helical membrane pass occupies residues 101-124 (DVWILLAALKVLSLLWLLYYTVGT). At 125–140 (TRKPHAVLYRDPHAGP) the chain is on the cytoplasmic side. A helical transmembrane segment spans residues 141 to 162 (IWVRGSLVLFGSCTVCLNIFRM). The Extracellular segment spans residues 163–174 (GYDVSHIHCKSE). The helical transmembrane segment at 175–198 (VELIFPAIEIVFMIIQTWVLWRHC) threads the bilayer. The Cytoplasmic portion of the chain corresponds to 199–206 (KDCVQVQT). A helical membrane pass occupies residues 207 to 229 (NFTRCGLMLTLATNLLMWVLAVT). The Extracellular portion of the chain corresponds to 230 to 276 (NDSMHREIEAELDALMEKFSGNGTNTCMCLNTTVCEVFRKGYLMLYP). The chain crosses the membrane as a helical span at residues 277–293 (FSTEYCLICCAVLFVMW). At 294-319 (KNVSRSLAAHTGAHPNRSPFRLHGTI) the chain is on the cytoplasmic side. The helical transmembrane segment at 320–339 (FGPLLGLLALVAGVCVFVLF) threads the bilayer. Topologically, residues 340-353 (QIEASGPDIARQYF) are extracellular. Residues 354–376 (TLYYAFYVAVLPTMSLACLAGTA) traverse the membrane as a helical segment. The Cytoplasmic segment spans residues 377-394 (IHGLEERELDTLKNPTRS). Residues 395 to 416 (LDVVLLMGAALGQMGIAYFSIV) traverse the membrane as a helical segment. At 417–427 (AIVATQPHELL) the chain is on the extracellular side. A helical membrane pass occupies residues 428-450 (NQLILAYSLLLILQHITQNLFII). Residues 451 to 510 (EGLHRRPLWEPAVSGVMEKQDVELPRRGSLRELGQDLRRASRAYIHSFSHLNWKRRMLKE) are Cytoplasmic-facing. Residues 511–528 (ISLFLILCNITLWMMPAF) form a helical membrane-spanning segment. Residues 529-547 (GIHPEFENGLEKDFYGYRT) are Extracellular-facing. The chain crosses the membrane as a helical span at residues 548–570 (WFTIVNFGLPLGVFYRMHSVGGL). Topologically, residues 571 to 577 (VEVYLGA) are cytoplasmic.

Belongs to the otopetrin family. Homodimer. As to expression, expressed in epidermis, small intestine, stomach and retina.

It is found in the cell membrane. It carries out the reaction H(+)(in) = H(+)(out). With respect to regulation, activated by extracellular acidification. Activated by Zn(2+) under non-acidic conditions. In terms of biological role, proton-selective channel gated by extracellular protons. This is Proton channel OTOP3 from Mus musculus (Mouse).